Reading from the N-terminus, the 980-residue chain is Valine--tRNA ligase (980 aa).

A 'HIGH' region motif is present at residues 43–53; the sequence is PNVTGTLHMGH. The 'KMSKS' region signature appears at 586–590; that stretch reads KMSKS. Position 589 (lysine 589) interacts with ATP. A coiled-coil region spans residues 914–980; that stretch reads LVDMDAERMR…AGLREQRGKL (67 aa).

It belongs to the class-I aminoacyl-tRNA synthetase family. ValS type 1 subfamily. Monomer.

The protein resides in the cytoplasm. It catalyses the reaction tRNA(Val) + L-valine + ATP = L-valyl-tRNA(Val) + AMP + diphosphate. In terms of biological role, catalyzes the attachment of valine to tRNA(Val). As ValRS can inadvertently accommodate and process structurally similar amino acids such as threonine, to avoid such errors, it has a 'posttransfer' editing activity that hydrolyzes mischarged Thr-tRNA(Val) in a tRNA-dependent manner. The polypeptide is Valine--tRNA ligase (Xanthomonas oryzae pv. oryzae (strain PXO99A)).